Here is a 535-residue protein sequence, read N- to C-terminus: Probable lipid II flippase MurJ (535 aa).

12 consecutive transmembrane segments (helical) span residues 90-110 (VLFT…PFIV), 131-151 (FATI…MAGM), 159-179 (FAAA…LAYA), 192-212 (DLSW…WVAV), 233-253 (LLVL…NLLI), 274-294 (IYQL…LPEL), 316-336 (FTLF…EPIV), 350-370 (TVVV…FVLI), 388-408 (IFAG…FPSL), 413-433 (IATA…ATLV), 451-471 (LVIA…WLAF), and 484-504 (LTLC…AFGI).

It belongs to the MurJ/MviN family.

The protein localises to the cell inner membrane. It participates in cell wall biogenesis; peptidoglycan biosynthesis. In terms of biological role, involved in peptidoglycan biosynthesis. Transports lipid-linked peptidoglycan precursors from the inner to the outer leaflet of the cytoplasmic membrane. The chain is Probable lipid II flippase MurJ from Rhizobium meliloti (strain 1021) (Ensifer meliloti).